Here is a 396-residue protein sequence, read N- to C-terminus: MRSPASSRRASALHRLCDSCRACGLSKVRCSKEKPTCSRCRRRGTVCEYVVTKRPGRKPDSRSEVEPEPGHLSHPLPSPESSTAISQGNLPDPDAFDPLFALPEPFDSTPELHSGPLSTVDSSLSSALTTWCPDFDDFFSFPVSTEDTLSGDRGAVYDGTIKHPPNLRRHSESPPAVPDDTIYLFGKPVDPAPPDQSLPATTTIGRRASPPSGRESEAGSRRLSCRCLIRALDLLKHFEVIRREAEIESSLPSIDAVVEVNKQTTEAITGMLQCPCSQKDGYLLVLLALIVCKILDRYAAAAIPGTEQGHDPTRRLDEGPMAGQRVLGELHCIQRVMNQLGPRLRMHGAQGASPGQAFHGTPAPLSVGLGDQLEPELHQRLSRLSSEIIRLLREAQ.

Positions 20-47 form a DNA-binding region, zn(2)-C6 fungal-type; it reads CRACGLSKVRCSKEKPTCSRCRRRGTVC. Disordered regions lie at residues 54–120, 190–218, and 346–365; these read RPGR…LSTV, DPAP…ESEA, and MHGA…PAPL. Positions 57 to 71 are enriched in basic and acidic residues; it reads RKPDSRSEVEPEPGH. The span at 72 to 82 shows a compositional bias: low complexity; that stretch reads LSHPLPSPESS.

In terms of tissue distribution, specifically expressed in conidia.

Its subcellular location is the nucleus. In terms of biological role, transcription factor that regulates the expression of the gene clusters that mediate the biosynthesis of trypacidin, a metabolite with antiprotozoal activity and a possible role in the infection process. Trypacidin is toxic for human pulmonary and bronchial epithelial cells by initiating the intracellular formation of nitric oxide (NO) and hydrogen peroxide (H(2)O(2)), thus triggering host necrotic cell death. This is Trypacidin cluster transcription factor from Aspergillus fumigatus (strain ATCC MYA-4609 / CBS 101355 / FGSC A1100 / Af293) (Neosartorya fumigata).